We begin with the raw amino-acid sequence, 396 residues long: MTINPVSRKVAWLRVVTLAIAAFIFNTTEFVPVGLLSDIAESFHMQTAQVGIMLTIYAWVVAVMSLPFMLLTSQMERRKLLICLFVLFIASHVLSFLAWNFTVLVISRIGIAFAHAIFWSITASLAIRLAPAGKRAQALSLIATGTALAMVLGLPIGRVVGQYFGWRTTFFAIGMGALITLLCLIKLLPKLPSEHSGSLKSLPLLFRRPALMSLYVLTVVVVTAHYTAYSYIEPFVQNVAGLSANFATVLLLILGGAGIIGSLVFGKLGNRHASSLVSIAIALLVVCLLLLLPAADSEAHLAILSIFWGIAIMVIGLGMQVKVLALAPDATDVAMALFSGIFNIGIGAGALVGNQVSLHWSMSAIGYIGAIPACAALVWAVLIFRKWPVTLEEQPH.

Transmembrane regions (helical) follow at residues Val-15–Leu-35, Val-50–Leu-70, Leu-81–Phe-101, Val-103–Ala-123, Ala-136–Ile-156, Thr-169–Pro-189, Pro-209–Tyr-229, Phe-246–Gly-266, Ser-275–Ala-295, Leu-301–Val-321, Val-333–Gly-353, and Ala-364–Phe-384.

Belongs to the major facilitator superfamily. SotB (TC 2.A.1.2) family.

The protein localises to the cell inner membrane. Its function is as follows. Involved in the efflux of sugars. The physiological role may be the reduction of the intracellular concentration of toxic sugars or sugar metabolites. In Salmonella agona (strain SL483), this protein is Probable sugar efflux transporter.